We begin with the raw amino-acid sequence, 165 residues long: Glycosyl-4,4'-diaponeurosporenoate acyltransferase (165 aa).

The signal sequence occupies residues 1–28 (MKTMKKYIKTAFFCSMYWLIVQLNIANL). A helical membrane pass occupies residues 126–145 (YINIFYAMIANVPIIIVQRY).

This sequence belongs to the acyltransferase CrtO family.

The protein localises to the cell membrane. It functions in the pathway carotenoid biosynthesis; staphyloxanthin biosynthesis; staphyloxanthin from farnesyl diphosphate: step 5/5. Functionally, catalyzes the acylation of glycosyl-4,4'-diaponeurosporenoate, i.e. the esterification of glucose at the C6'' position with the carboxyl group of the C(15) fatty acid 12-methyltetradecanoic acid, to yield staphyloxanthin. This is the last step in the biosynthesis of this orange pigment, present in most staphylococci strains. The chain is Glycosyl-4,4'-diaponeurosporenoate acyltransferase (crtO) from Staphylococcus aureus (strain Newman).